The chain runs to 207 residues: Ribonuclease HII (207 aa).

Residues 19-207 (HCIAGVDEVG…PVKKALGIEE (189 aa)) form the RNase H type-2 domain. Residues Asp25, Glu26, and Asp117 each contribute to the a divalent metal cation site.

Belongs to the RNase HII family. It depends on Mn(2+) as a cofactor. Mg(2+) is required as a cofactor.

The protein localises to the cytoplasm. The catalysed reaction is Endonucleolytic cleavage to 5'-phosphomonoester.. In terms of biological role, endonuclease that specifically degrades the RNA of RNA-DNA hybrids. This is Ribonuclease HII from Vibrio vulnificus (strain CMCP6).